Reading from the N-terminus, the 360-residue chain is Dynein intermediate light chain dil1 (360 aa).

The protein belongs to the dynein light intermediate chain DYN3 family. As to quaternary structure, the dynein complex consists of at least two heavy chains and a number of intermediate and light chains. Interacts with rga3, sec10, sec16, syp1, rvb2, spbc19c7.04c, spbc2f12.05 and spac3a11.10c. In terms of processing, the N-terminal part is acetylated.

It localises to the cytoplasm. It is found in the cytoskeleton. Component of the cytoplasmic dynein which acts as a motor for the intracellular retrograde motility of vesicles and organelles along microtubules. Promotes oscillatory nuclear movement and efficient pairing of homologous centromeres during meiotic prophase. The chain is Dynein intermediate light chain dil1 (dil1) from Schizosaccharomyces pombe (strain 972 / ATCC 24843) (Fission yeast).